The primary structure comprises 508 residues: Cobyric acid synthase (508 aa).

A GATase cobBQ-type domain is found at 249-451; sequence EVDVAIINLP…IHGIFENSLF (203 aa). The Nucleophile role is filled by Cys330. The active site involves His443.

Belongs to the CobB/CobQ family. CobQ subfamily.

It functions in the pathway cofactor biosynthesis; adenosylcobalamin biosynthesis. Functionally, catalyzes amidations at positions B, D, E, and G on adenosylcobyrinic A,C-diamide. NH(2) groups are provided by glutamine, and one molecule of ATP is hydrogenolyzed for each amidation. The protein is Cobyric acid synthase of Caldanaerobacter subterraneus subsp. tengcongensis (strain DSM 15242 / JCM 11007 / NBRC 100824 / MB4) (Thermoanaerobacter tengcongensis).